The primary structure comprises 178 residues: Large ribosomal subunit protein uL13m (178 aa).

It belongs to the universal ribosomal protein uL13 family. Component of the mitochondrial ribosome large subunit (39S) which comprises a 16S rRNA and about 50 distinct proteins. Interacts with OXA1L.

The protein localises to the mitochondrion. The protein is Large ribosomal subunit protein uL13m (MRPL13) of Bos taurus (Bovine).